Consider the following 398-residue polypeptide: Ubiquitin-like modifier-activating enzyme 5 (398 aa).

ATP contacts are provided by Gly79, Asp100, Lys123, Asn146, and Asn180. The Zn(2+) site is built by Cys222 and Cys225. Cys246 serves as the catalytic Glycyl thioester intermediate. Zn(2+)-binding residues include Cys299 and Cys304. The short motif at 330–342 (VVHEDNEWGIELV) is the UFM1-interacting sequence (UIS) element. Residues 343-373 (SEVTEAELQDASGPIPDLPEGITVAYTIPEK) are linker. The UFC1-binding sequence (UFC) motif lies at 383–398 (ETEQSLEELMAQMKKI).

This sequence belongs to the ubiquitin-activating E1 family. UBA5 subfamily. In terms of assembly, homodimer; homodimerization is required for ufm1 activation. Interacts (via UIS motif) with ufm1; binds ufm1 via a trans-binding mechanism in which ufm1 interacts with distinct sites in both subunits of the uba5 homodimer. Interacts (via C-terminus) with ufc1.

The protein localises to the cytoplasm. The protein resides in the nucleus. It is found in the endoplasmic reticulum membrane. Its subcellular location is the golgi apparatus. In terms of biological role, E1-like enzyme which specifically catalyzes the first step in ufmylation. Activates ufm1 by first adenylating its C-terminal glycine residue with ATP, and thereafter linking this residue to the side chain of a cysteine residue in E1, yielding a ufm1-E1 thioester and free AMP. Activates ufm1 via a trans-binding mechanism, in which ufm1 interacts with distinct sites in both subunits of the uba5 homodimer. Trans-binding also promotes stabilization of the uba5 homodimer, and enhances ATP-binding. Transfer of ufm1 from uba5 to the E2-like enzyme UFC1 also takes place using a trans mechanism. Ufmylation plays a key role in various processes, such as ribosome recycling, response to DNA damage, interferon response or reticulophagy (also called ER-phagy). This Danio rerio (Zebrafish) protein is Ubiquitin-like modifier-activating enzyme 5.